The following is a 565-amino-acid chain: Adenine deaminase (565 aa).

This sequence belongs to the metallo-dependent hydrolases superfamily. Adenine deaminase family. Mn(2+) serves as cofactor.

The catalysed reaction is adenine + H2O + H(+) = hypoxanthine + NH4(+). The polypeptide is Adenine deaminase (Cereibacter sphaeroides (strain KD131 / KCTC 12085) (Rhodobacter sphaeroides)).